The sequence spans 235 residues: H2HPP isomerase (235 aa).

Cupin type-2 domains lie at 41–106 and 151–216; these read VPPH…AIDI and KIPG…KSIN. 8 residues coordinate a divalent metal cation: His50, His52, Gln56, His91, His162, His164, Gln168, and His202. Tyr223 contributes to the substrate binding site.

Monomer. The cofactor is Fe(2+). Co(2+) is required as a cofactor.

It is found in the cytoplasm. The enzyme catalyses 3-[(4R)-4-hydroxycyclohexa-1,5-dien-1-yl]-2-oxopropanoate = 3-[(1E,4R)-4-hydroxycyclohex-2-en-1-ylidene]pyruvate. Its pathway is antibiotic biosynthesis; bacilysin biosynthesis. In terms of biological role, part of the bacABCDEF operon responsible for the biosynthesis of the nonribosomally synthesized dipeptide antibiotic bacilysin, composed of L-alanine and L-anticapsin. Bacilysin is an irreversible inactivator of the glutaminase domain of glucosamine synthetase. BacB catalyzes the allylic isomerization of the endocyclic-delta(4),delta(8)-7R-dihydro-hydroxyphenylpyruvate (en-H2HPP) to generate a mixture of 3E,7R- and 3Z, 7R-olefins (E/Z ration of 3/1) of the exocyclic-delta(3),delta(5)-dihydro-hydroxyphenylpyruvate (ex-H2HPP). This is H2HPP isomerase from Bacillus subtilis (strain 168).